The primary structure comprises 283 residues: Phosphate import ATP-binding protein PstB (283 aa).

Polar residues predominate over residues 1 to 20 (MAQTLAQTKQISQSHTFDVS). Residues 1–33 (MAQTLAQTKQISQSHTFDVSQSHHKTPNDTNSH) form a disordered region. Residues 37 to 278 (YSTQNLDLWY…PSNKKTEDYI (242 aa)) form the ABC transporter domain. 69-76 (GPSGCGKS) lines the ATP pocket.

This sequence belongs to the ABC transporter superfamily. Phosphate importer (TC 3.A.1.7) family. In terms of assembly, the complex is composed of two ATP-binding proteins (PstB), two transmembrane proteins (PstC and PstA) and a solute-binding protein (PstS).

Its subcellular location is the cell membrane. It catalyses the reaction phosphate(out) + ATP + H2O = ADP + 2 phosphate(in) + H(+). Part of the ABC transporter complex PstSACB involved in phosphate import. Responsible for energy coupling to the transport system. The protein is Phosphate import ATP-binding protein PstB of Staphylococcus aureus (strain bovine RF122 / ET3-1).